A 277-amino-acid polypeptide reads, in one-letter code: Inositol monophosphatase 1 (277 aa).

Residues E70, D90, I92, and D93 each coordinate Mg(2+). E70 serves as a coordination point for substrate. Residue 92 to 95 participates in substrate binding; it reads IDGT. At T168 the chain carries Phosphothreonine. Substrate-binding positions include 194–196, E213, and D220; that span reads GTA. A Mg(2+)-binding site is contributed by D220.

This sequence belongs to the inositol monophosphatase superfamily. As to quaternary structure, homodimer. The cofactor is Mg(2+). Post-translationally, the N-terminus is blocked.

The protein localises to the cytoplasm. It catalyses the reaction a myo-inositol phosphate + H2O = myo-inositol + phosphate. The catalysed reaction is 1D-myo-inositol 1-phosphate + H2O = myo-inositol + phosphate. It carries out the reaction 1D-myo-inositol 2-phosphate + H2O = myo-inositol + phosphate. The enzyme catalyses 1D-myo-inositol 3-phosphate + H2O = myo-inositol + phosphate. It catalyses the reaction 1D-myo-inositol 4-phosphate + H2O = myo-inositol + phosphate. The catalysed reaction is 1D-myo-inositol 5-phosphate + H2O = myo-inositol + phosphate. It carries out the reaction 1D-myo-inositol 6-phosphate + H2O = myo-inositol + phosphate. The enzyme catalyses scyllo-inositol 1-phosphate + H2O = scyllo-inositol + phosphate. It catalyses the reaction alpha-D-galactose 1-phosphate + H2O = D-galactose + phosphate. The catalysed reaction is alpha-D-glucose 1-phosphate + H2O = D-glucose + phosphate. It carries out the reaction D-glucose 6-phosphate + H2O = D-glucose + phosphate. The enzyme catalyses beta-D-fructose 1-phosphate + H2O = D-fructose + phosphate. It catalyses the reaction glycerol 2-phosphate + H2O = glycerol + phosphate. The catalysed reaction is adenosine 2'-phosphate + H2O = adenosine + phosphate. It participates in polyol metabolism; myo-inositol biosynthesis; myo-inositol from D-glucose 6-phosphate: step 2/2. With respect to regulation, activity with myo-inositol monophosphate and D-galactose 1-phosphate is inhibited by Li(+), Ca(2+) and Mn(2+), but also by Mg(2+) at concentrations above 3 mM. Its function is as follows. Phosphatase involved in the dephosphorylation of myo-inositol monophosphate to generate myo-inositol. Is also able to dephosphorylate scyllo-inositol-phosphate, myo-inositol 1,4-diphosphate, scyllo-inositol-1,3-diphosphate and scyllo-inositol-1,4-diphosphate. Also dephosphorylates in vitro other sugar-phosphates including D-galactose-1-phosphate, glucose-1-phosphate, glucose-6-phosphate, fructose-1-phosphate, beta-glycerophosphate and 2'-AMP. Responsible for the provision of inositol required for synthesis of phosphatidylinositol and polyphosphoinositides, and involved in maintaining normal brain function. Has been implicated as the pharmacological target for lithium Li(+) action in brain. Is equally active with myo-inositol monophosphate and D-galactose 1-phosphate. The sequence is that of Inositol monophosphatase 1 (IMPA1) from Bos taurus (Bovine).